The sequence spans 687 residues: Mediator of RNA polymerase II transcription subunit 17 (687 aa).

Over residues 30–43 (LSSNPNSSLHSPTS) the composition is skewed to low complexity. Disordered regions lie at residues 30-70 (LSSN…NKTK) and 130-189 (QLGS…ETDD). Composition is skewed to basic and acidic residues over residues 56-70 (TSIR…NKTK), 136-147 (SDGHNSEKKDTD), and 167-183 (KDNP…KTNE).

Belongs to the Mediator complex subunit 17 family. In terms of assembly, component of the Mediator complex, which is composed of at least 21 subunits that form three structurally distinct submodules. The Mediator head module contains MED6, MED8, MED11, SRB4/MED17, SRB5/MED18, ROX3/MED19, SRB2/MED20 and SRB6/MED22, the middle module contains MED1, MED4, NUT1/MED5, MED7, CSE2/MED9, NUT2/MED10, SRB7/MED21 and SOH1/MED31, and the tail module contains MED2, PGD1/MED3, RGR1/MED14, GAL11/MED15 and SIN4/MED16. The head and the middle modules interact directly with RNA polymerase II, whereas the elongated tail module interacts with gene-specific regulatory proteins. The head module may also interact with the TFIIF complex. SRB4/MED17 interacts directly with MED6, MED11, ROX3/MED19, SRB2/MED20 and SRB6/MED22. Interacts directly with the activator GAL4.

The protein resides in the nucleus. Its function is as follows. Component of the Mediator complex, a coactivator involved in the regulated transcription of nearly all RNA polymerase II-dependent genes. Mediator functions as a bridge to convey information from gene-specific regulatory proteins to the basal RNA polymerase II transcription machinery. The Mediator complex, having a compact conformation in its free form, is recruited to promoters by direct interactions with regulatory proteins and serves for the assembly of a functional preinitiation complex with RNA polymerase II and the general transcription factors. The Mediator complex unfolds to an extended conformation and partially surrounds RNA polymerase II, specifically interacting with the unphosphorylated form of the C-terminal domain (CTD) of RNA polymerase II. The Mediator complex dissociates from the RNA polymerase II holoenzyme and stays at the promoter when transcriptional elongation begins. This Saccharomyces cerevisiae (strain ATCC 204508 / S288c) (Baker's yeast) protein is Mediator of RNA polymerase II transcription subunit 17 (SRB4).